The following is a 963-amino-acid chain: MVSSRRGFNPIAFTPWPVTILTSLVYLALIIPIIVVHHLVPPAPKQSPPGVDLEEAWHDLQHLTRQYHPYNSHSNDEVHQWLLKRIRAISATTSARSESQGGPEVFVFDDNQTNLTFSSAGVAATAITGVYFESKNIVVYIRGTEDEPGEWWKSPDGEPSGKGGVLVNAHYDSVSTGYGATDNGVGVITTLQLLKYFTTPGHYPRKGLVLLFNNGEEDFLNGAYAYSQHPMSKFTHTFLNLEGAGAGGRAVLFRSTDTEITRFYGKSQHPFGTVLARDAFKLGFIRSETDYHVFDGVFGMRGLDVAFMEPRSRYHTDQDDARHTSIDSVWHMLSAAITTTEGLVSYTGNEFDGDSGEGGKLNNGVGTLGVWFDFFGSSLAVFQLNTLFGLSVALLVVAPLLLILTSVALFAVDKMYMFSMYTYLSESGGQVSLYGLRGMFRFPLILGISTALTVALAFLIMKVNPFIIYSSPYAVWSMMLSTCMFFAWFISCVADFARPSALHRAYAFSWMFGILWVFLVIATVYQRQHGIASSYFIVFYFAGVSVATWISYLELFGLSTTQDYARRQSRLSDRTPSSDSHLLAPSADELPSSGSVAGRDFNPEDVEDEEPTESTSLLRGQQRTTFANYASARGSQESNISNQGSSLLHPKNNRLEQKWSIYLVSSAWILQFLLVAPIVLILLGQLGLFLTSATYQIGADGGSQFIIYIGIAVLSVLILLPLFPFIHRFTYHIPTFMLFVLIGTLVYNLTAFPFSHNSRLKVAFVQEMDLGTGKNQASLVGVEPYIRDIVHAIPFVNDEEISCTSKGYGGRTKCSWPGLRPTVVDGPYKDWVTYNISQTKEDKTTRFEVSGKNTRACKLLFDSPISDFHVHGSVVDKRIPHTGSKGVSEVRLWSRNWENTWTVDVEWTKKSAERTGRVMCLWSDDNDLNLIPELDMIRKFAPWWVAITKLRDGLVEGSYSFKL.

Residues 1–15 (MVSSRRGFNPIAFTP) are Cytoplasmic-facing. The helical transmembrane segment at 16 to 36 (WPVTILTSLVYLALIIPIIVV) threads the bilayer. Over 37-391 (HHLVPPAPKQ…FQLNTLFGLS (355 aa)) the chain is Vacuolar. Asn111 and Asn114 each carry an N-linked (GlcNAc...) asparagine glycan. Zn(2+) is bound by residues His170 and Asp182. The active-site Proton acceptor is Glu216. Positions 217, 242, and 315 each coordinate Zn(2+). A helical transmembrane segment spans residues 392–412 (VALLVVAPLLLILTSVALFAV). Over 413–441 (DKMYMFSMYTYLSESGGQVSLYGLRGMFR) the chain is Cytoplasmic. The chain crosses the membrane as a helical span at residues 442–462 (FPLILGISTALTVALAFLIMK). At 463–473 (VNPFIIYSSPY) the chain is on the vacuolar side. A helical membrane pass occupies residues 474 to 494 (AVWSMMLSTCMFFAWFISCVA). The Cytoplasmic portion of the chain corresponds to 495 to 504 (DFARPSALHR). Residues 505-525 (AYAFSWMFGILWVFLVIATVY) traverse the membrane as a helical segment. The Vacuolar segment spans residues 526 to 535 (QRQHGIASSY). Residues 536-556 (FIVFYFAGVSVATWISYLELF) traverse the membrane as a helical segment. Residues 557-668 (GLSTTQDYAR…WSIYLVSSAW (112 aa)) are Cytoplasmic-facing. The segment at 569-618 (SRLSDRTPSSDSHLLAPSADELPSSGSVAGRDFNPEDVEDEEPTESTSLL) is disordered. Over residues 603–612 (PEDVEDEEPT) the composition is skewed to acidic residues. The chain crosses the membrane as a helical span at residues 669–689 (ILQFLLVAPIVLILLGQLGLF). The Vacuolar portion of the chain corresponds to 690-705 (LTSATYQIGADGGSQF). The helical transmembrane segment at 706 to 726 (IIYIGIAVLSVLILLPLFPFI) threads the bilayer. The Cytoplasmic segment spans residues 727–732 (HRFTYH). Residues 733–753 (IPTFMLFVLIGTLVYNLTAFP) form a helical membrane-spanning segment. Topologically, residues 754 to 963 (FSHNSRLKVA…LVEGSYSFKL (210 aa)) are vacuolar. The N-linked (GlcNAc...) asparagine glycan is linked to Asn835.

The protein belongs to the peptidase M28 family. The cofactor is Zn(2+).

It localises to the vacuole membrane. May be involved in vacuolar sorting and osmoregulation. The protein is Vacuolar membrane protease of Arthroderma gypseum (strain ATCC MYA-4604 / CBS 118893) (Microsporum gypseum).